Here is a 274-residue protein sequence, read N- to C-terminus: Purine nucleoside phosphorylase 1 (274 aa).

Residues Ser-29, His-60, Arg-80–His-82, and Ala-112 contribute to the phosphate site. At Ser-29 the chain carries Phosphoserine. Glu-192 lines the a purine D-ribonucleoside pocket. Phosphate is bound at residue Ser-211. Asn-234 lines the a purine D-ribonucleoside pocket.

Belongs to the PNP/MTAP phosphorylase family. In terms of assembly, homotrimer.

The enzyme catalyses a purine D-ribonucleoside + phosphate = a purine nucleobase + alpha-D-ribose 1-phosphate. The catalysed reaction is a purine 2'-deoxy-D-ribonucleoside + phosphate = a purine nucleobase + 2-deoxy-alpha-D-ribose 1-phosphate. The protein operates within purine metabolism; purine nucleoside salvage. In terms of biological role, the purine nucleoside phosphorylases catalyze the phosphorolytic breakdown of the N-glycosidic bond in the beta-(deoxy)ribonucleoside molecules, with the formation of the corresponding free purine bases and pentose-1-phosphate. Cleaves guanosine, inosine, 2'-deoxyguanosine and 2'-deoxyinosine. The chain is Purine nucleoside phosphorylase 1 (punA) from Geobacillus stearothermophilus (Bacillus stearothermophilus).